The chain runs to 637 residues: Early transcription factor 70 kDa subunit (637 aa).

It belongs to the helicase family. VETF subfamily. As to quaternary structure, heterodimer of a 70 kDa and a 82 kDa subunit. Part of the early transcription complex composed of ETF, RAP94/OPG109, and the DNA-directed RNA polymerase. In terms of processing, apparently non-glycosylated.

Its subcellular location is the virion. Functionally, acts with RNA polymerase to initiate transcription from early gene promoters. Is recruited by the RPO-associated protein of 94 kDa RAP94/OPG109 to form the early transcription complex, which also contains the core RNA polymerase. ETF heterodimer binds to early gene promoters. This chain is Early transcription factor 70 kDa subunit (OPG118), found in Monkeypox virus.